The sequence spans 498 residues: ATP synthase subunit beta, chloroplastic (498 aa).

172 to 179 provides a ligand contact to ATP; it reads GGAGVGKT.

The protein belongs to the ATPase alpha/beta chains family. As to quaternary structure, F-type ATPases have 2 components, CF(1) - the catalytic core - and CF(0) - the membrane proton channel. CF(1) has five subunits: alpha(3), beta(3), gamma(1), delta(1), epsilon(1). CF(0) has four main subunits: a(1), b(1), b'(1) and c(9-12).

The protein resides in the plastid. Its subcellular location is the chloroplast thylakoid membrane. It carries out the reaction ATP + H2O + 4 H(+)(in) = ADP + phosphate + 5 H(+)(out). In terms of biological role, produces ATP from ADP in the presence of a proton gradient across the membrane. The catalytic sites are hosted primarily by the beta subunits. This chain is ATP synthase subunit beta, chloroplastic, found in Drimys granadensis.